The following is a 4022-amino-acid chain: Intermembrane lipid transfer protein VPS13B (4022 aa).

In terms of domain architecture, Chorein N-terminal spans Leu-2 to Ser-102. The interval His-100–Asp-134 is disordered. Positions Cys-103–Ser-119 are enriched in polar residues. Phosphoserine occurs at positions 414, 999, 1002, and 1033. Positions Asn-1247–Asn-1314 are disordered. Composition is skewed to polar residues over residues Pro-1264–Asp-1292 and Phe-1302–Asn-1314. At Ser-1815 the chain carries Phosphoserine. Residues Lys-1860–Lys-1872 show a composition bias toward basic and acidic residues. Residues Lys-1860–Val-1880 form a disordered region. In terms of domain architecture, SHR-BD spans His-2631–Gln-2716. A localizes the protein to the Golgi apparatus region spans residues Ala-3908–Pro-4022.

It belongs to the VPS13 family. As to quaternary structure, interacts with STX6. Interacts with STX12. Interacts with RAB6A isoform 1 (GTP-bound) and isoform 2 (GTP-bound). Interacts with RAB6B (GTP-bound). As to expression, widely expressed. There is apparent differential expression of different transcripts. In fetal brain, lung, liver, and kidney, two transcripts of 2 and 5 kb are identified. These transcripts are also seen in all adult tissues analyzed. A larger transcript (12-14 kb) is expressed in prostate, testis, ovary, and colon in the adult. Expression is very low in adult brain tissue. Expressed in peripheral blood lymphocytes. Isoform 1 and isoform 2 are expressed in brain and retina. Isoform 2 is expressed ubiquitously.

The protein localises to the recycling endosome membrane. It localises to the cytoplasmic vesicle. Its subcellular location is the secretory vesicle. The protein resides in the acrosome membrane. It is found in the golgi apparatus. The protein localises to the cis-Golgi network membrane. It localises to the endoplasmic reticulum-Golgi intermediate compartment membrane. Its subcellular location is the trans-Golgi network membrane. The protein resides in the early endosome membrane. It is found in the lysosome membrane. In terms of biological role, mediates the transfer of lipids between membranes at organelle contact sites. Binds phosphatidylinositol 3-phosphate. Functions as a tethering factor in the slow endocytic recycling pathway, to assist traffic between early and recycling endosomes. Involved in the transport of proacrosomal vesicles to the nuclear dense lamina (NDL) during spermatid development. Plays a role in the assembly of the Golgi apparatus, possibly by mediating trafficking to the Golgi membrane. Plays a role in the development of the nervous system, and may be required for neuron projection development. May also play a role during adipose tissue development. Required for maintenance of the ocular lens. In Homo sapiens (Human), this protein is Intermembrane lipid transfer protein VPS13B (VPS13B).